We begin with the raw amino-acid sequence, 398 residues long: S-adenosylmethionine synthase (398 aa).

Residues 1 to 21 (MAANRRLFTSESVTEGHPDKM) form a disordered region. ATP is bound at residue His17. Residue Asp19 coordinates Mg(2+). Glu45 lines the K(+) pocket. Glu58 and Gln101 together coordinate L-methionine. Residues 101-111 (QSADIAGGVNQ) form a flexible loop region. Residues 177–179 (DGK), 244–245 (RF), Asp253, 259–260 (RK), Ala276, and Lys280 each bind ATP. Asp253 is an L-methionine binding site. Lys284 contacts L-methionine.

Belongs to the AdoMet synthase family. Homotetramer; dimer of dimers. Requires Mg(2+) as cofactor. K(+) serves as cofactor.

The protein localises to the cytoplasm. It catalyses the reaction L-methionine + ATP + H2O = S-adenosyl-L-methionine + phosphate + diphosphate. It functions in the pathway amino-acid biosynthesis; S-adenosyl-L-methionine biosynthesis; S-adenosyl-L-methionine from L-methionine: step 1/1. Its function is as follows. Catalyzes the formation of S-adenosylmethionine (AdoMet) from methionine and ATP. The overall synthetic reaction is composed of two sequential steps, AdoMet formation and the subsequent tripolyphosphate hydrolysis which occurs prior to release of AdoMet from the enzyme. The polypeptide is S-adenosylmethionine synthase (Oceanobacillus iheyensis (strain DSM 14371 / CIP 107618 / JCM 11309 / KCTC 3954 / HTE831)).